The primary structure comprises 295 residues: Protease HtpX (295 aa).

A run of 2 helical transmembrane segments spans residues 4–24 (ILLFLATNLAVVLIASITLSL) and 42–62 (QLLVFCAVFGFAGSLFSLFIS). His-147 contacts Zn(2+). The active site involves Glu-148. Residue His-151 coordinates Zn(2+). 2 helical membrane-spanning segments follow: residues 158–178 (VTLALVQGVVNTFVMFFARII) and 199–219 (ITTIFAELVLGFLASAIVMWF). Glu-224 provides a ligand contact to Zn(2+).

Belongs to the peptidase M48B family. Zn(2+) is required as a cofactor.

It localises to the cell inner membrane. This chain is Protease HtpX, found in Pseudomonas savastanoi pv. phaseolicola (strain 1448A / Race 6) (Pseudomonas syringae pv. phaseolicola (strain 1448A / Race 6)).